The primary structure comprises 695 residues: Sodium-dependent phosphate transport protein 2B (695 aa).

The tract at residues 1–44 is disordered; that stretch reads MAPWPELENAHPNPNKFIEGASGPQSSIPDKDKGTSKTNDSGTP. The Cytoplasmic portion of the chain corresponds to 1–90; it reads MAPWPELENA…KWSERDSKGK (90 aa). A helical membrane pass occupies residues 91–111; it reads ILCIFQGIGKFILLLGFLYLF. Residues 112–136 are Extracellular-facing; it reads VCSLDVLSSAFQLVGGKMAGQFFSN. A helical transmembrane segment spans residues 137-157; the sequence is NSIMSNPVAGLVIGVLVTVMV. Residues 158-213 lie on the Cytoplasmic side of the membrane; sequence QSSSTSSSIIVSMVASSLLSVRAAIPIIMGANIGTSITNTIVALMQAGDRNEFRRA. The helical transmembrane segment at 214–234 threads the bilayer; that stretch reads FAGATVHDFFNWLSVLVLLPL. Residues 235-363 lie on the Extracellular side of the membrane; it reads EAATHYLEKL…FVNFSLPDLA (129 aa). N295, N313, N321, N340, and N356 each carry an N-linked (GlcNAc...) asparagine glycan. A disulfide bond links C303 and C350. A helical transmembrane segment spans residues 364 to 384; sequence VGIILLTVSLLILCGCLIMIV. At 385–408 the chain is on the cytoplasmic side; it reads KLLGSVLRGQVATVIKKTLNTDFP. A helical transmembrane segment spans residues 409 to 429; that stretch reads FPFAWLTGYLAILVGAGMTFI. The Extracellular portion of the chain corresponds to 430–486; it reads VQSSSVFTSAMTPLIGIGVISIERAYPLTLGSNIGTTTTAILAALASPGNTLRSSLQ. The helical transmembrane segment at 487 to 507 threads the bilayer; that stretch reads IALCHFFFNISGILLWYPIPF. The Cytoplasmic segment spans residues 508–526; sequence TRLPIRLAKGLGNISAKYR. A helical transmembrane segment spans residues 527–547; the sequence is WFAVFYLIFFFLLTPLTVFGL. Topologically, residues 548–551 are extracellular; that stretch reads SLAG. A helical membrane pass occupies residues 552 to 572; it reads WPVLVGVGVPIILLILLVLCL. The Cytoplasmic portion of the chain corresponds to 573–695; that stretch reads RMLQARCPRI…MKALSNTTVF (123 aa).

It belongs to the SLC34A transporter family. In terms of tissue distribution, highly expressed in the lung, in type II alveolar cells. Moderately expressed in kidney followed by small intestine.

It is found in the apical cell membrane. The enzyme catalyses 3 Na(+)(out) + phosphate(out) = 3 Na(+)(in) + phosphate(in). Involved in actively transporting phosphate into cells via Na(+) cotransport. The sequence is that of Sodium-dependent phosphate transport protein 2B (Slc34a2) from Rattus norvegicus (Rat).